Reading from the N-terminus, the 344-residue chain is Phosphate acyltransferase (344 aa).

Belongs to the PlsX family. Homodimer. Probably interacts with PlsY.

The protein localises to the cytoplasm. The catalysed reaction is a fatty acyl-[ACP] + phosphate = an acyl phosphate + holo-[ACP]. It participates in lipid metabolism; phospholipid metabolism. Functionally, catalyzes the reversible formation of acyl-phosphate (acyl-PO(4)) from acyl-[acyl-carrier-protein] (acyl-ACP). This enzyme utilizes acyl-ACP as fatty acyl donor, but not acyl-CoA. In Enterobacter sp. (strain 638), this protein is Phosphate acyltransferase.